Consider the following 141-residue polypeptide: 4-hydroxybenzoyl-CoA thioesterase (141 aa).

The active site involves aspartate 17. Substrate contacts are provided by residues tryptophan 47, 59-61, and lysine 90; that span reads TPI.

Belongs to the 4-hydroxybenzoyl-CoA thioesterase family. Homotetramer.

The catalysed reaction is 4-hydroxybenzoyl-CoA + H2O = 4-hydroxybenzoate + CoA + H(+). The protein operates within xenobiotic degradation; 4-chlorobenzoate degradation; 4-hydroxybenzoate from 4-chlorobenzoate: step 3/3. Unaffected by EDTA, Mg(2+), Mn(2+), Fe(2+), Ca(2+), Co(2+) and Zn(2+). Its function is as follows. Hydrolyzes 4-hydroxybenzoate-CoA, and to a lesser extent benzoyl-CoA and 4-chlorobenzoate-CoA. Not active against aliphatic acyl-CoA thioesters, including palmitoyl-CoA, hexanoyl-CoA and acetyl-CoA. The polypeptide is 4-hydroxybenzoyl-CoA thioesterase (Pseudomonas sp. (strain CBS-3)).